Consider the following 56-residue polypeptide: Large ribosomal subunit protein bL32 (56 aa).

Belongs to the bacterial ribosomal protein bL32 family.

The protein is Large ribosomal subunit protein bL32 of Edwardsiella ictaluri (strain 93-146).